A 174-amino-acid polypeptide reads, in one-letter code: N5-carboxyaminoimidazole ribonucleotide mutase (174 aa).

Positions 16, 19, and 46 each coordinate substrate.

Belongs to the AIR carboxylase family. Class I subfamily.

The catalysed reaction is 5-carboxyamino-1-(5-phospho-D-ribosyl)imidazole + H(+) = 5-amino-1-(5-phospho-D-ribosyl)imidazole-4-carboxylate. It functions in the pathway purine metabolism; IMP biosynthesis via de novo pathway; 5-amino-1-(5-phospho-D-ribosyl)imidazole-4-carboxylate from 5-amino-1-(5-phospho-D-ribosyl)imidazole (N5-CAIR route): step 2/2. Catalyzes the conversion of N5-carboxyaminoimidazole ribonucleotide (N5-CAIR) to 4-carboxy-5-aminoimidazole ribonucleotide (CAIR). This chain is N5-carboxyaminoimidazole ribonucleotide mutase, found in Mycobacterium tuberculosis (strain CDC 1551 / Oshkosh).